Consider the following 233-residue polypeptide: MVIVMEIYEGKAKKVIPLDDGKVIIEFKDDATAFNGKKKAQFKGKGWLNAQISAILFKVLEEKGIKTHFIGVAGDNKLIVEKLKMYPVEVVVRNVIAGSLKKRLPLKEGTELSEPIVELYYKNDDLGDPMINHYHAKVLGVSERELKEIENIALKVNNILKEYFAQRGIILVDFKLEFGKNERGEIILGDEISPDTCRFWDAETKESLDKDVFRFDKGELINAYEELYKRLTA.

Belongs to the SAICAR synthetase family.

It catalyses the reaction 5-amino-1-(5-phospho-D-ribosyl)imidazole-4-carboxylate + L-aspartate + ATP = (2S)-2-[5-amino-1-(5-phospho-beta-D-ribosyl)imidazole-4-carboxamido]succinate + ADP + phosphate + 2 H(+). The protein operates within purine metabolism; IMP biosynthesis via de novo pathway; 5-amino-1-(5-phospho-D-ribosyl)imidazole-4-carboxamide from 5-amino-1-(5-phospho-D-ribosyl)imidazole-4-carboxylate: step 1/2. The protein is Phosphoribosylaminoimidazole-succinocarboxamide synthase of Thermococcus sibiricus (strain DSM 12597 / MM 739).